The sequence spans 537 residues: Multidrug resistance protein Stp (537 aa).

14 helical membrane passes run 6–26 (LLTL…ALIV), 46–66 (WVVA…ATLA), 77–97 (IGVS…SIAV), 104–124 (AQGL…SAAF), 136–156 (IWTA…GLLV), 163–183 (SIFY…LCYV), 200–220 (LLFI…PQIG), 223–243 (SVQT…FVWL), 262–282 (YALA…MLLL), 300–320 (LMIL…GHLV), 327–347 (VPIL…IFSE), 352–372 (ALVL…LTPI), 397–417 (AIGS…WLSA), and 478–498 (VALL…WRWF).

It belongs to the major facilitator superfamily. EmrB family.

It localises to the cell membrane. This is Multidrug resistance protein Stp (stp) from Mycobacterium tuberculosis (strain CDC 1551 / Oshkosh).